A 651-amino-acid chain; its full sequence is UvrABC system protein C (651 aa).

Residues 20–97 (ERCGVYRMFD…IKKFQPKFNI (78 aa)) enclose the GIY-YIG domain. One can recognise a UVR domain in the interval 207–242 (KALQENLSKKMEELSSQMRFEEAAEIRDRIKALSYV).

The protein belongs to the UvrC family. As to quaternary structure, interacts with UvrB in an incision complex.

It is found in the cytoplasm. Its function is as follows. The UvrABC repair system catalyzes the recognition and processing of DNA lesions. UvrC both incises the 5' and 3' sides of the lesion. The N-terminal half is responsible for the 3' incision and the C-terminal half is responsible for the 5' incision. The chain is UvrABC system protein C from Rickettsia akari (strain Hartford).